The following is a 124-amino-acid chain: Ubiquitin-related modifier 1 (124 aa).

The segment at 34–53 is disordered; the sequence is IPSLVPKDNTTSAKNPPPKD. 1-thioglycine is present on Gly124. Gly124 participates in a covalent cross-link: Glycyl lysine isopeptide (Gly-Lys) (interchain with K-? in acceptor proteins).

The protein belongs to the URM1 family. C-terminal thiocarboxylation occurs in 2 steps, it is first acyl-adenylated (-COAMP) via the hesA/moeB/thiF part of UBA4, then thiocarboxylated (-COSH) via the rhodanese domain of UBA4.

The protein resides in the cytoplasm. It functions in the pathway tRNA modification; 5-methoxycarbonylmethyl-2-thiouridine-tRNA biosynthesis. Acts as a sulfur carrier required for 2-thiolation of mcm(5)S(2)U at tRNA wobble positions of cytosolic tRNA(Lys), tRNA(Glu) and tRNA(Gln). Serves as sulfur donor in tRNA 2-thiolation reaction by being thiocarboxylated (-COSH) at its C-terminus by the MOCS3 homolog UBA4. The sulfur is then transferred to tRNA to form 2-thiolation of mcm(5)S(2)U. Prior mcm(5) tRNA modification by the elongator complex is required for 2-thiolation. Also acts as a ubiquitin-like protein (UBL) that is covalently conjugated via an isopeptide bond to lysine residues of target proteins such as AHP1. The thiocarboxylated form serves as substrate for conjugation and oxidative stress specifically induces the formation of UBL-protein conjugates. This Coprinopsis cinerea (strain Okayama-7 / 130 / ATCC MYA-4618 / FGSC 9003) (Inky cap fungus) protein is Ubiquitin-related modifier 1.